Consider the following 410-residue polypeptide: Elongation factor Tu, chloroplastic (410 aa).

The tr-type G domain occupies 10 to 214 (KPHINIGTIG…QVDKYIPTPQ (205 aa)). The G1 stretch occupies residues 19–26 (GHVDHGKT). Residue 19–26 (GHVDHGKT) coordinates GTP. Thr26 lines the Mg(2+) pocket. Residues 60-64 (GITIN) are G2. Residues 81-84 (DCPG) form a G3 region. Residues 81-85 (DCPGH) and 136-139 (NKED) contribute to the GTP site. A G4 region spans residues 136 to 139 (NKED). Residues 174–176 (SAL) form a G5 region.

This sequence belongs to the TRAFAC class translation factor GTPase superfamily. Classic translation factor GTPase family. EF-Tu/EF-1A subfamily.

The protein localises to the plastid. Its subcellular location is the chloroplast. It carries out the reaction GTP + H2O = GDP + phosphate + H(+). GTP hydrolase that promotes the GTP-dependent binding of aminoacyl-tRNA to the A-site of ribosomes during protein biosynthesis. The chain is Elongation factor Tu, chloroplastic (tufA) from Mesostigma viride (Green alga).